The sequence spans 579 residues: MKAFVSQALQGALQQLHAQGRIPGIPATLELDRPKQVEHGHLASNVALLLAKAVGRKPRDIADDIVAALPASDWIARTEIAGPGFINFFLQPAAFHAVIHRVRTEKEHFGANRNGAGQRLQMEFVSANPTGPLHVGHGRGAAYGASLANILRFNGFDIFCEYYVNDAGRQMDILAASVYLRYLEADKALPWPFPENGYRGDYVREIAAHLREQVGDRLRHAAVGLPNLPQMSDGDIAIDTLIAHLKQSLGEDYRTLHSAGLDEILADIRDDLEGFGVHYERWYSEGSLMDTGAVDSAVAALEKAGHCYTQEGALWFRATAFDDDKDRVLRRDNGAYTYFASDVAYHAEKFARGFTHVIDMWGADHHGYVPRVKAALRALGLDDQQLEVVLVQFAILYRGTEKISMSTRAGEFVTLRELREEVGNDAARFFYVLRRADQHLDFDLELAKKHSEENPVFYIQYAHARVYSLLRQSVEKGLSLPPADGVGLEILQESREIALADALWRFPEVVATAARDREPHQIAFYLRELAAAFHTYYNSTRILVEETPLRHARLTLCLAVAQSIANGLRLLGVSAPEQM.

The 'HIGH' region signature appears at 127-137; that stretch reads ANPTGPLHVGH.

The protein belongs to the class-I aminoacyl-tRNA synthetase family. Monomer.

It is found in the cytoplasm. The enzyme catalyses tRNA(Arg) + L-arginine + ATP = L-arginyl-tRNA(Arg) + AMP + diphosphate. In Acidithiobacillus ferrooxidans (strain ATCC 23270 / DSM 14882 / CIP 104768 / NCIMB 8455) (Ferrobacillus ferrooxidans (strain ATCC 23270)), this protein is Arginine--tRNA ligase.